We begin with the raw amino-acid sequence, 89 residues long: Small ribosomal subunit protein uS15 (89 aa).

The protein belongs to the universal ribosomal protein uS15 family. Part of the 30S ribosomal subunit. Forms a bridge to the 50S subunit in the 70S ribosome, contacting the 23S rRNA.

Functionally, one of the primary rRNA binding proteins, it binds directly to 16S rRNA where it helps nucleate assembly of the platform of the 30S subunit by binding and bridging several RNA helices of the 16S rRNA. Its function is as follows. Forms an intersubunit bridge (bridge B4) with the 23S rRNA of the 50S subunit in the ribosome. The sequence is that of Small ribosomal subunit protein uS15 from Shewanella amazonensis (strain ATCC BAA-1098 / SB2B).